The following is a 728-amino-acid chain: Peroxisome biogenesis protein 5 (728 aa).

Residues 1-58 form a disordered region; it reads MAMRDLVNGGAACAVPGSSSSSNPLGALTNALLGSSSKTQERLKEIPNANRSGPRPQF. The amphipathic helix 1 (AH1) stretch occupies residues 11–97; that stretch reads AACAVPGSSS…FRGFRSVDQN (87 aa). Residue Cys-13 forms a Glycyl cysteine thioester (Cys-Gly) (interchain with G-Cter in ubiquitin) linkage. 3 repeat units span residues 240-244, 257-261, and 270-274. Short sequence motifs (wxxxF/Y motif) lie at residues 240–244, 257–261, and 270–274; these read WAAEF, WVQSF, and WATEF. Positions 288-311 are amphipathic helix 3 (AH3); sequence SMDMQNIAAMEQTRKLAHTLSQDG. Repeat copies occupy residues 348–352, 362–366, 378–382, 396–400, 408–412, and 425–429. Short sequence motifs (wxxxF/Y motif) lie at residues 348–352, 362–366, 378–382, 396–400, 408–412, and 425–429; these read WATEY, WADQF, WADEF, WVNEF, WIDEF, and WANAY. Residues 392–417 are amphipathic helix 4 (AH4); that stretch reads AEDQWVNEFSKLNVDDWIDEFAEGPV. 4 TPR repeats span residues 491–524, 590–623, 625–657, and 658–691; these read AEGW…DPTN, ADVH…KPND, SLWN…KPNY, and VRAW…NPKA.

Belongs to the peroxisomal targeting signal receptor family. In terms of assembly, interacts (via WxxxF/Y and LVxEF motifs) with PEX14; promoting translocation through the PEX13-PEX14 docking complex. Interacts with PEX7, promoting peroxisomal import of proteins containing a C-terminal PTS2-type peroxisomal targeting signal. Interacts with LACS7. Monoubiquitinated at Cys-13 by PEX2 during PEX5 passage through the retrotranslocation channel. Cys-13 monoubiquitination acts as a recognition signal for the PEX1-PEX6 complex and is required for PEX5 extraction and export from peroxisomes. When PEX5 recycling is compromised, polyubiquitinated by PEX10 during its passage through the retrotranslocation channel, leading to its degradation. Expressed in flowers, siliques, leaves and roots.

It is found in the cytoplasm. The protein resides in the cytosol. The protein localises to the peroxisome matrix. In terms of biological role, receptor that mediates peroxisomal import of proteins containing a C-terminal PTS1-type tripeptide peroxisomal targeting signal (SKL-type). Binds to cargo proteins containing a PTS1 peroxisomal targeting signal in the cytosol, and translocates them into the peroxisome matrix by passing through the PEX13-PEX14 docking complex along with cargo proteins. PEX5 receptor is then retrotranslocated into the cytosol, leading to release of bound cargo in the peroxisome matrix, and reset for a subsequent peroxisome import cycle. In addition to promoting peroxisomal translocation of proteins containing a PTS1 peroxisomal targeting signal, mediates peroxisomal import of proteins containing a C-terminal PTS2-type peroxisomal targeting signal via its interaction with PEX7. Interaction with PEX7 only takes place when PEX7 is associated with cargo proteins containing a PTS2 peroxisomal targeting signal. PEX7 along with PTS2-containing cargo proteins are then translocated through the PEX13-PEX14 docking complex together with PEX5. Necessary for the developmental elimination of obsolete peroxisome matrix proteins. The protein is Peroxisome biogenesis protein 5 (PEX5) of Arabidopsis thaliana (Mouse-ear cress).